Consider the following 374-residue polypeptide: tRNA-specific 2-thiouridylase MnmA (374 aa).

Residues 13 to 20 and Met39 contribute to the ATP site; that span reads GMSGGVDS. An interaction with target base in tRNA region spans residues 99-101; the sequence is NPD. Residue Cys104 is the Nucleophile of the active site. Cys104 and Cys201 form a disulfide bridge. Gly128 serves as a coordination point for ATP. The interval 151 to 153 is interaction with tRNA; sequence KDQ. Cys201 (cysteine persulfide intermediate) is an active-site residue. The interval 313–314 is interaction with tRNA; it reads RY.

This sequence belongs to the MnmA/TRMU family.

It localises to the cytoplasm. The enzyme catalyses S-sulfanyl-L-cysteinyl-[protein] + uridine(34) in tRNA + AH2 + ATP = 2-thiouridine(34) in tRNA + L-cysteinyl-[protein] + A + AMP + diphosphate + H(+). Its function is as follows. Catalyzes the 2-thiolation of uridine at the wobble position (U34) of tRNA, leading to the formation of s(2)U34. The sequence is that of tRNA-specific 2-thiouridylase MnmA from Streptococcus equi subsp. zooepidemicus (strain MGCS10565).